We begin with the raw amino-acid sequence, 217 residues long: ATP phosphoribosyltransferase (217 aa).

It belongs to the ATP phosphoribosyltransferase family. Short subfamily. Heteromultimer composed of HisG and HisZ subunits.

It localises to the cytoplasm. It carries out the reaction 1-(5-phospho-beta-D-ribosyl)-ATP + diphosphate = 5-phospho-alpha-D-ribose 1-diphosphate + ATP. Its pathway is amino-acid biosynthesis; L-histidine biosynthesis; L-histidine from 5-phospho-alpha-D-ribose 1-diphosphate: step 1/9. In terms of biological role, catalyzes the condensation of ATP and 5-phosphoribose 1-diphosphate to form N'-(5'-phosphoribosyl)-ATP (PR-ATP). Has a crucial role in the pathway because the rate of histidine biosynthesis seems to be controlled primarily by regulation of HisG enzymatic activity. This chain is ATP phosphoribosyltransferase, found in Syntrophomonas wolfei subsp. wolfei (strain DSM 2245B / Goettingen).